Here is a 402-residue protein sequence, read N- to C-terminus: MLRWLTAGESHGPELIAVLEGLPAGVPVSPDAIRADLARRKLGYGRGSRMKFEQDALEVSGGVRHGLSLGSPVALRIGNSEWPKWVDLMSPEPIAAEKLAGARGAPLTRPRPGHADLAGMQKYGFDEARPVLERASARETAARVALGAVARSFLGELGITLVSHTLSIGPVRVPEDAVWPTPADVAALDADPLRCFDRATSARMVAEVDAAHKDGDTLGGVIEVLAYGLPPGLGSYVHWDRRLDAQLAAALMGIQAIKGVEVGDGFLTATRRGSEAHDELVAEDGAIVRQSGRAGGTEGGMSTGGVLRVRAGMKPIATVPRALRTIDVATSEAAPAHHQRSDVCAVPAAGVVAEAMVALVLANAVLEKFGGDSIGETARNLRGYLDAISQNLATERVSAPYA.

NADP(+) contacts are provided by arginine 40 and arginine 46. FMN is bound by residues 134–136, 255–256, glycine 299, 314–318, and arginine 340; these read RAS, QA, and KPIAT.

It belongs to the chorismate synthase family. As to quaternary structure, homotetramer. It depends on FMNH2 as a cofactor.

It carries out the reaction 5-O-(1-carboxyvinyl)-3-phosphoshikimate = chorismate + phosphate. It participates in metabolic intermediate biosynthesis; chorismate biosynthesis; chorismate from D-erythrose 4-phosphate and phosphoenolpyruvate: step 7/7. Catalyzes the anti-1,4-elimination of the C-3 phosphate and the C-6 proR hydrogen from 5-enolpyruvylshikimate-3-phosphate (EPSP) to yield chorismate, which is the branch point compound that serves as the starting substrate for the three terminal pathways of aromatic amino acid biosynthesis. This reaction introduces a second double bond into the aromatic ring system. This Leifsonia xyli subsp. xyli (strain CTCB07) protein is Chorismate synthase.